Here is a 326-residue protein sequence, read N- to C-terminus: MRPLMLQGHERSITQIKYNREGDLLFSCSKDQKPNVWYSLNGERLGTYDGHQGAVWCLDVDWESRKLITGAGDMTTKLWDVEYGTIIASIPTKSSVRTSNFSFSGNQAAYSTDKAMGQNCELFIIDVRNADSTLADQTPTLRIPMTESKITSMQWGPLDETIITGHDNGNIAIWDVRKGQKVVDSGSDHAAGINDMQLSKDGTMFVTASRDTTAKLFDSESLMCLKTYKTERPVNSAAISPILDHVVLGGGQDAMEVTTTSTKAGKFDSRFFHLIYEEEFARLKGHFGPINSLAFHPDGKSYASGGEDGFVRVQTFDSTYFENIFE.

WD repeat units lie at residues 8–47, 50–89, 145–184, 188–227, and 285–326; these read GHERSITQIKYNREGDLLFSCSKDQKPNVWYSLNGERLGT, GHQGAVWCLDVDWESRKLITGAGDMTTKLWDVEYGTIIAS, MTESKITSMQWGPLDETIITGHDNGNIAIWDVRKGQKVVD, DHAAGINDMQLSKDGTMFVTASRDTTAKLFDSESLMCLKT, and GHFG…NIFE.

Belongs to the eIF-3 subunit I family. As to quaternary structure, component of the eukaryotic translation initiation factor 3 (eIF-3) complex. The eIF-3 complex interacts with pix.

It is found in the cytoplasm. In terms of biological role, component of the eukaryotic translation initiation factor 3 (eIF-3) complex, which is involved in protein synthesis of a specialized repertoire of mRNAs and, together with other initiation factors, stimulates binding of mRNA and methionyl-tRNAi to the 40S ribosome. The eIF-3 complex specifically targets and initiates translation of a subset of mRNAs involved in cell proliferation. This is Eukaryotic translation initiation factor 3 subunit I from Drosophila pseudoobscura pseudoobscura (Fruit fly).